Consider the following 332-residue polypeptide: DNA-directed RNA polymerase subunit alpha (332 aa).

An alpha N-terminal domain (alpha-NTD) region spans residues 1–234 (MIEYVIPKKL…NHLQIITDSL (234 aa)). The tract at residues 264–332 (AVYSKKIDEL…KFGLSLKKGG (69 aa)) is alpha C-terminal domain (alpha-CTD).

It belongs to the RNA polymerase alpha chain family. Homodimer. The RNAP catalytic core consists of 2 alpha, 1 beta, 1 beta' and 1 omega subunit. When a sigma factor is associated with the core the holoenzyme is formed, which can initiate transcription.

The catalysed reaction is RNA(n) + a ribonucleoside 5'-triphosphate = RNA(n+1) + diphosphate. Its function is as follows. DNA-dependent RNA polymerase catalyzes the transcription of DNA into RNA using the four ribonucleoside triphosphates as substrates. This is DNA-directed RNA polymerase subunit alpha from Pseudothermotoga lettingae (strain ATCC BAA-301 / DSM 14385 / NBRC 107922 / TMO) (Thermotoga lettingae).